The primary structure comprises 396 residues: Phosphoglycerate kinase (396 aa).

Residues 21–23 (DFN), arginine 36, 59–62 (HLGR), arginine 118, and arginine 151 contribute to the substrate site. ATP contacts are provided by residues lysine 201, glycine 292, glutamate 323, and 349-352 (GGDS).

Belongs to the phosphoglycerate kinase family. In terms of assembly, monomer.

It is found in the cytoplasm. The enzyme catalyses (2R)-3-phosphoglycerate + ATP = (2R)-3-phospho-glyceroyl phosphate + ADP. Its pathway is carbohydrate degradation; glycolysis; pyruvate from D-glyceraldehyde 3-phosphate: step 2/5. The chain is Phosphoglycerate kinase from Leptospira interrogans serogroup Icterohaemorrhagiae serovar copenhageni (strain Fiocruz L1-130).